We begin with the raw amino-acid sequence, 334 residues long: ADP-L-glycero-D-manno-heptose-6-epimerase (334 aa).

NADP(+)-binding positions include 11–12, 32–33, Lys-39, Lys-54, 77–81, and Asn-94; these read FI, DN, and QGACS. Tyr-141 functions as the Proton acceptor in the catalytic mechanism. Lys-145 serves as a coordination point for NADP(+). Asn-171 serves as a coordination point for substrate. Residues Val-172 and Lys-180 each contribute to the NADP(+) site. The active-site Proton acceptor is Lys-180. Residues Arg-182, His-189, 203–206, Arg-216, and Tyr-295 each bind substrate; that span reads FGSN.

Belongs to the NAD(P)-dependent epimerase/dehydratase family. HldD subfamily. Homopentamer. It depends on NADP(+) as a cofactor.

It carries out the reaction ADP-D-glycero-beta-D-manno-heptose = ADP-L-glycero-beta-D-manno-heptose. It participates in nucleotide-sugar biosynthesis; ADP-L-glycero-beta-D-manno-heptose biosynthesis; ADP-L-glycero-beta-D-manno-heptose from D-glycero-beta-D-manno-heptose 7-phosphate: step 4/4. Its function is as follows. Catalyzes the interconversion between ADP-D-glycero-beta-D-manno-heptose and ADP-L-glycero-beta-D-manno-heptose via an epimerization at carbon 6 of the heptose. The polypeptide is ADP-L-glycero-D-manno-heptose-6-epimerase (Neisseria meningitidis serogroup C (strain 053442)).